We begin with the raw amino-acid sequence, 649 residues long: Acetyl-coenzyme A synthetase (649 aa).

CoA contacts are provided by residues 190-193 and Thr310; that span reads RGGR. ATP-binding positions include 386–388, 410–415, Asp499, and Arg514; these read GEP and DTWWQT. Ser522 contributes to the CoA binding site. Arg525 contacts ATP. Residues Val536, His538, and Val541 each coordinate Mg(2+). Arg583 contacts CoA. Lys608 carries the N6-acetyllysine modification.

It belongs to the ATP-dependent AMP-binding enzyme family. Mg(2+) is required as a cofactor. Acetylated. Deacetylation by the SIR2-homolog deacetylase activates the enzyme.

The catalysed reaction is acetate + ATP + CoA = acetyl-CoA + AMP + diphosphate. Its function is as follows. Catalyzes the conversion of acetate into acetyl-CoA (AcCoA), an essential intermediate at the junction of anabolic and catabolic pathways. AcsA undergoes a two-step reaction. In the first half reaction, AcsA combines acetate with ATP to form acetyl-adenylate (AcAMP) intermediate. In the second half reaction, it can then transfer the acetyl group from AcAMP to the sulfhydryl group of CoA, forming the product AcCoA. This Methylorubrum extorquens (strain PA1) (Methylobacterium extorquens) protein is Acetyl-coenzyme A synthetase.